Reading from the N-terminus, the 1828-residue chain is Proteasome activator complex subunit 4 (1828 aa).

HEAT repeat units follow at residues 462–506 (PEGP…LVDC), 985–1024 (NFCCRDLIPLVLEFLRPERQDVTQQQFKGALYCLLGNHGG), 1164–1202 (YVLPVRAIRYLVQCLNHDALIVRKMAISTVAGILKQLKR), 1339–1377 (DAFLPIIKPHLERLVADSHESTQRCAAEIVAGLIRGSKH), 1621–1659 (PVQVPLVLDVLRQTARSSSWHARYTVLTYIQTMVFYNLF), and 1665–1703 (EESVQGVRWLILQLMEDEQLEVREMAATTLSGLLQCNFL). Residues 1635–1723 (ARSSSWHARY…EALCKTRLPK (89 aa)) are bromodomain-like (BRDL).

It belongs to the BLM10 family. As to quaternary structure, homodimer. Interacts with the 20S and 26S proteasomes.

The protein resides in the cytoplasm. It localises to the cytosol. Its subcellular location is the nucleus. The protein localises to the nucleus speckle. Its function is as follows. Associated component of the proteasome that specifically recognizes acetylated histones and promotes ATP- and ubiquitin-independent degradation of core histones during DNA damage response. Recognizes and binds acetylated histones via its bromodomain-like (BRDL) region and activates the proteasome by opening the gated channel for substrate entry. Binds to the core proteasome via its C-terminus, which occupies the same binding sites as the proteasomal ATPases, opening the closed structure of the proteasome via an active gating mechanism. involved in DNA damage response in somatic cells: binds to acetylated histones and promotes degradation of histones. The chain is Proteasome activator complex subunit 4 (psme4) from Xenopus laevis (African clawed frog).